We begin with the raw amino-acid sequence, 84 residues long: Putative membrane protein insertion efficiency factor (84 aa).

The tract at residues 64–84 (GGSGYDPPPPRHQPRKWKCEE) is disordered. Over residues 75-84 (HQPRKWKCEE) the composition is skewed to basic residues.

This sequence belongs to the UPF0161 family.

The protein resides in the cell inner membrane. In terms of biological role, could be involved in insertion of integral membrane proteins into the membrane. This is Putative membrane protein insertion efficiency factor from Caulobacter vibrioides (strain ATCC 19089 / CIP 103742 / CB 15) (Caulobacter crescentus).